The following is a 277-amino-acid chain: Small ribosomal subunit protein uS3 (277 aa).

In terms of domain architecture, KH type-2 spans 43–111 (IRELMSKGMD…QIQLNILEVK (69 aa)). The tract at residues 217 to 277 (AAQQAAAPSS…AEANNAEGGK (61 aa)) is disordered. Over residues 245 to 258 (NDRNDRGGRRERDS) the composition is skewed to basic and acidic residues. The span at 259 to 277 (AAAPQQNSAAEANNAEGGK) shows a compositional bias: low complexity.

Belongs to the universal ribosomal protein uS3 family. As to quaternary structure, part of the 30S ribosomal subunit. Forms a tight complex with proteins S10 and S14.

Binds the lower part of the 30S subunit head. Binds mRNA in the 70S ribosome, positioning it for translation. This chain is Small ribosomal subunit protein uS3, found in Kocuria rhizophila (strain ATCC 9341 / DSM 348 / NBRC 103217 / DC2201).